A 410-amino-acid chain; its full sequence is Protein LTV1 homolog (410 aa).

Disordered stretches follow at residues 142 to 165 (VYRS…DEMY) and 325 to 378 (EMDI…ARKL). Acidic residues-rich tracts occupy residues 151 to 165 (DSEE…DEMY) and 325 to 345 (EMDI…DDDK). A compositionally biased stretch (basic and acidic residues) spans 357–366 (PKNETPEQRS). Residues 363–389 (EQRSLRKKAVKEARKLRRVEKKANKTM) adopt a coiled-coil conformation. Residues 367–378 (LRKKAVKEARKL) show a composition bias toward basic residues.

The protein belongs to the LTV1 family.

The protein is Protein LTV1 homolog of Caenorhabditis elegans.